Here is a 324-residue protein sequence, read N- to C-terminus: Methenyltetrahydromethanopterin cyclohydrolase (324 aa).

Belongs to the MCH family.

It localises to the cytoplasm. The catalysed reaction is 5,10-methenyl-5,6,7,8-tetrahydromethanopterin + H2O = N(5)-formyl-5,6,7,8-tetrahydromethanopterin + H(+). The protein operates within one-carbon metabolism; formaldehyde degradation; formate from formaldehyde (H(4)MPT route): step 3/5. In terms of biological role, catalyzes the hydrolysis of methenyl-H(4)MPT(+) to 5-formyl-H(4)MPT. The polypeptide is Methenyltetrahydromethanopterin cyclohydrolase (Methylobacterium nodulans (strain LMG 21967 / CNCM I-2342 / ORS 2060)).